The primary structure comprises 305 residues: RNA-binding protein with serine-rich domain 1 (305 aa).

The span at 1 to 10 (MDLSGVKKKS) shows a compositional bias: basic residues. Residues 1-161 (MDLSGVKKKS…KRRSPSPKPT (161 aa)) are necessary for interaction with SRP54, nuclear localization and exon-skipping. Residues 1 to 170 (MDLSGVKKKS…TKVHIGRLTR (170 aa)) are disordered. A necessary for interaction with the cleaved p110 isoform of CDC2L1 region spans residues 1-220 (MDLSGVKKKS…ENPDEAEKAL (220 aa)). Residues Lys7 and Lys15 each participate in a glycyl lysine isopeptide (Lys-Gly) (interchain with G-Cter in SUMO2) cross-link. Residues 33–59 (DRSDEKSKDRSKDKGTTKESSEKDRGR) show a composition bias toward basic and acidic residues. Ser53 carries the phosphoserine modification. Positions 68 to 126 (ASSGSSSTRSRSSSTSSSGSSTSTGSSSGSSSSSASSRSGSSSTSRSSSSSSSSGSPSP) are enriched in low complexity. Positions 69-121 (SSGSSSTRSRSSSTSSSGSSTSTGSSSGSSSSSASSRSGSSSTSRSSSSSSSS) are necessary for interactions with UPF2 and UPF3B and UPF2-dependent NMD. 2 stretches are compositionally biased toward basic residues: residues 127 to 143 (SRRR…KSKP) and 151 to 167 (RKRR…HIGR). 2 positions are modified to phosphoserine: Ser155 and Ser157. Positions 156 to 242 (PSPKPTKVHI…ITATAVLAPW (87 aa)) are necessary for interaction with PNN and exon-skipping. The tract at residues 159–244 (KPTKVHIGRL…ATAVLAPWPR (86 aa)) is interaction with SAP18 and ACIN1. Thr161 carries the post-translational modification Phosphothreonine. The RRM domain occupies 161–240 (TKVHIGRLTR…QEITATAVLA (80 aa)). Lys218 is subject to N6-acetyllysine. A necessary for interaction with TRA2B, nuclear localization and exon-skipping region spans residues 238-305 (VLAPWPRPPP…RSRSSSNSSR (68 aa)). The interval 240-305 (APWPRPPPRR…RSRSSSNSSR (66 aa)) is disordered. Pro residues predominate over residues 242–262 (WPRPPPRRFSPPRRMLPPPPM). A compositionally biased stretch (basic residues) spans 266 to 298 (SPPRMRRRSRSPRRRSPVRRRSRSPGRRRHRSR).

It belongs to the splicing factor SR family. Found in mRNA splicing-dependent exon junction complexes (EJC). Found in a post-splicing complex with NXF1, RBM8A, UPF1, UPF2, UPF3A, UPF3B and RNPS1. Component of the heterotrimeric ASAP (apoptosis- and splicing-associated protein) and PSAP complexes consisting of RNPS1, SAP18 and either ACIN1 or PNN, respectively; the ASAP and PSAP complexes probably are formed mutually exclusive. Component of the active spliceosome. Associates with polysomes. Interacts with the cleaved p110 isoform of CDC2L1, CSNK2A1, PNN, SART3, SRP54, SRRM1 and TRA2B/SFRS10. In terms of processing, phosphorylated on one or more of the four Ser/Thr residues (Ser-43, Thr-49, Ser-52 or Ser-53). Ser-53 phosphorylation site is important for splicing and translation stimulation activity in vitro.

The protein localises to the nucleus. It is found in the nucleus speckle. The protein resides in the cytoplasm. Its function is as follows. Part of pre- and post-splicing multiprotein mRNP complexes. Auxiliary component of the splicing-dependent multiprotein exon junction complex (EJC) deposited at splice junction on mRNAs. The EJC is a dynamic structure consisting of core proteins and several peripheral nuclear and cytoplasmic associated factors that join the complex only transiently either during EJC assembly or during subsequent mRNA metabolism. Component of the ASAP and PSAP complexes which bind RNA in a sequence-independent manner and are proposed to be recruited to the EJC prior to or during the splicing process and to regulate specific excision of introns in specific transcription subsets. The ASAP complex can inhibit RNA processing during in vitro splicing reactions. The ASAP complex promotes apoptosis and is disassembled after induction of apoptosis. Enhances the formation of the ATP-dependent A complex of the spliceosome. Involved in both constitutive splicing and, in association with SRP54 and TRA2B/SFRS10, in distinctive modulation of alternative splicing in a substrate-dependent manner. Involved in the splicing modulation of BCL2L1/Bcl-X (and probably other apoptotic genes); specifically inhibits formation of proapoptotic isoforms such as Bcl-X(S); the activity is different from the established EJC assembly and function. Participates in mRNA 3'-end cleavage. Involved in UPF2-dependent nonsense-mediated decay (NMD) of mRNAs containing premature stop codons. Also mediates increase of mRNA abundance and translational efficiency. Binds spliced mRNA 20-25 nt upstream of exon-exon junctions. This chain is RNA-binding protein with serine-rich domain 1 (Rnps1), found in Rattus norvegicus (Rat).